Consider the following 570-residue polypeptide: 15-cis-phytoene desaturase, chloroplastic/chromoplastic (570 aa).

The transit peptide at 1–91 (MSIVGLVSVV…AQLSASFRSS (91 aa)) directs the protein to the chloroplast and chromoplast. FAD contacts are provided by residues 104-120 (GAGL…ADAG), Ala108, 127-128 (ES), Lys135, 152-153 (HI), and Tyr158. Substrate is bound at residue Arg293. FAD is bound at residue Asp524. Residue Ala532 coordinates substrate. FAD is bound at residue Met534.

It belongs to the carotenoid/retinoid oxidoreductase family. As to quaternary structure, homotetramer. FAD serves as cofactor. Expressed more strongly in flowers than in leaves.

The protein resides in the plastid. Its subcellular location is the chloroplast. It is found in the chromoplast. It localises to the membrane. It catalyses the reaction 2 a plastoquinone + 15-cis-phytoene = 9,9',15-tri-cis-zeta-carotene + 2 a plastoquinol. Its pathway is carotenoid biosynthesis; lycopene biosynthesis. Its function is as follows. Converts phytoene into zeta-carotene via the intermediary of phytofluene by the symmetrical introduction of two double bonds at the C-11 and C-11' positions of phytoene with a concomitant isomerization of two neighboring double bonds at the C9 and C9' positions from trans to cis. The polypeptide is 15-cis-phytoene desaturase, chloroplastic/chromoplastic (PDS1) (Narcissus pseudonarcissus (Daffodil)).